Here is a 396-residue protein sequence, read N- to C-terminus: L-lactate dehydrogenase (396 aa).

The FMN hydroxy acid dehydrogenase domain occupies 1–380 (MIISAASDYR…TQDSLVQGLG (380 aa)). Tyr24 contributes to the substrate binding site. Residues Ser106 and Gln127 each coordinate FMN. Residue Tyr129 coordinates substrate. Position 155 (Thr155) interacts with FMN. A substrate-binding site is contributed by Arg164. Residue Lys251 coordinates FMN. Residue His275 is the Proton acceptor of the active site. Arg278 contacts substrate. 306–330 (DSGIRNGLDVVRMIALGADTVLLGR) is a binding site for FMN.

It belongs to the FMN-dependent alpha-hydroxy acid dehydrogenase family. FMN serves as cofactor.

It is found in the cell inner membrane. The catalysed reaction is (S)-lactate + A = pyruvate + AH2. Functionally, catalyzes the conversion of L-lactate to pyruvate. Is coupled to the respiratory chain. The sequence is that of L-lactate dehydrogenase from Escherichia coli O7:K1 (strain IAI39 / ExPEC).